Reading from the N-terminus, the 464-residue chain is Formin-like protein 19 (464 aa).

The tract at residues 1–74 is disordered; the sequence is MSLVDISGAY…PRPCSRPPKT (74 aa). The segment covering 14–70 has biased composition (pro residues); sequence PLPPPPPPLMRRRAPLPPPPPPPLMRRRAPPPPPPPLMRRRAPPPPPPPPLPRPCSR. The 395-residue stretch at 68-462 folds into the FH2 domain; the sequence is CSRPPKTKCS…KAAKEAEMEK (395 aa).

This sequence belongs to the formin-like family. Class-II subfamily.

The polypeptide is Formin-like protein 19 (FH19) (Arabidopsis thaliana (Mouse-ear cress)).